A 156-amino-acid chain; its full sequence is ATP synthase subunit b (156 aa).

The helical transmembrane segment at 7–27 (LIGQLIAFAIFVAFCMKFVWP) threads the bilayer.

The protein belongs to the ATPase B chain family. In terms of assembly, F-type ATPases have 2 components, F(1) - the catalytic core - and F(0) - the membrane proton channel. F(1) has five subunits: alpha(3), beta(3), gamma(1), delta(1), epsilon(1). F(0) has three main subunits: a(1), b(2) and c(10-14). The alpha and beta chains form an alternating ring which encloses part of the gamma chain. F(1) is attached to F(0) by a central stalk formed by the gamma and epsilon chains, while a peripheral stalk is formed by the delta and b chains.

It localises to the cell inner membrane. F(1)F(0) ATP synthase produces ATP from ADP in the presence of a proton or sodium gradient. F-type ATPases consist of two structural domains, F(1) containing the extramembraneous catalytic core and F(0) containing the membrane proton channel, linked together by a central stalk and a peripheral stalk. During catalysis, ATP synthesis in the catalytic domain of F(1) is coupled via a rotary mechanism of the central stalk subunits to proton translocation. In terms of biological role, component of the F(0) channel, it forms part of the peripheral stalk, linking F(1) to F(0). This chain is ATP synthase subunit b, found in Pasteurella multocida (strain Pm70).